The following is a 303-amino-acid chain: MADTDCKWDPGADKYPLLGFGQAVIGPPGSGKSTYVRAMQALLAQMGRKSAIINLDPAGEDEPGAAVSLRELLGLEEVMSELRLGPNGALLYCMEYLQENLDWLRGRLQGLRGTYFLLDCPGQVELYTHHPALPDVLRRLGAWGLRLCAVHLVDSHYCTDPAKFISVLCTSLSTMLHVELPHINVLSKMDLIEQYGRLAFNLDYYTEVMDLSYLVEQLTSDPFFRRHKRLHEKLAEVIQDYGLVTFMPLSIKDEKSLRLVLSAVDKASGFCFGETKQSLGNLMSVAVGADFQFTSYPSHDCRG.

29-34 (GSGKST) contacts GTP. Positions 85–87 (GPN) match the Gly-Pro-Asn (GPN)-loop; involved in dimer interface motif. A GTP-binding site is contributed by 187-190 (SKMD).

This sequence belongs to the GPN-loop GTPase family. As to quaternary structure, heterodimers with gpn1 or gpn3. Binds to RNA polymerase II (RNAPII).

In terms of biological role, small GTPase required for proper localization of RNA polymerase II and III (RNAPII and RNAPIII). May act at an RNAP assembly step prior to nuclear import. This is GPN-loop GTPase 2 from Xenopus tropicalis (Western clawed frog).